A 72-amino-acid polypeptide reads, in one-letter code: Exodeoxyribonuclease 7 small subunit (72 aa).

This sequence belongs to the XseB family. Heterooligomer composed of large and small subunits.

The protein localises to the cytoplasm. The enzyme catalyses Exonucleolytic cleavage in either 5'- to 3'- or 3'- to 5'-direction to yield nucleoside 5'-phosphates.. Functionally, bidirectionally degrades single-stranded DNA into large acid-insoluble oligonucleotides, which are then degraded further into small acid-soluble oligonucleotides. In Chlamydia muridarum (strain MoPn / Nigg), this protein is Exodeoxyribonuclease 7 small subunit.